Here is a 131-residue protein sequence, read N- to C-terminus: Profilin (131 aa).

Cysteine 13 and cysteine 115 are joined by a disulfide. The Involved in PIP2 interaction signature appears at alanine 81–threonine 97. Threonine 111 bears the Phosphothreonine mark.

The protein belongs to the profilin family. Occurs in many kinds of cells as a complex with monomeric actin in a 1:1 ratio.

It is found in the cytoplasm. It localises to the cytoskeleton. Binds to actin and affects the structure of the cytoskeleton. At high concentrations, profilin prevents the polymerization of actin, whereas it enhances it at low concentrations. The polypeptide is Profilin (Phoenix dactylifera (Date palm)).